The following is a 167-amino-acid chain: Large ribosomal subunit protein uL10 (167 aa).

The protein belongs to the universal ribosomal protein uL10 family. Part of the ribosomal stalk of the 50S ribosomal subunit. The N-terminus interacts with L11 and the large rRNA to form the base of the stalk. The C-terminus forms an elongated spine to which L12 dimers bind in a sequential fashion forming a multimeric L10(L12)X complex.

Forms part of the ribosomal stalk, playing a central role in the interaction of the ribosome with GTP-bound translation factors. This chain is Large ribosomal subunit protein uL10, found in Dichelobacter nodosus (strain VCS1703A).